A 132-amino-acid chain; its full sequence is Small ribosomal subunit protein uS8c (132 aa).

Belongs to the universal ribosomal protein uS8 family. Part of the 30S ribosomal subunit.

Its subcellular location is the plastid. It is found in the chloroplast. In terms of biological role, one of the primary rRNA binding proteins, it binds directly to 16S rRNA central domain where it helps coordinate assembly of the platform of the 30S subunit. The sequence is that of Small ribosomal subunit protein uS8c (rps8) from Staurastrum punctulatum (Green alga).